The following is a 375-amino-acid chain: All-trans-retinol dehydrogenase [NAD(+)] ADH1B (375 aa).

Serine 2 carries the post-translational modification N-acetylserine. Position 23 is a phosphoserine (serine 23). The residue at position 35 (tyrosine 35) is a Phosphotyrosine. Residues cysteine 47, histidine 68, cysteine 98, cysteine 101, cysteine 104, cysteine 112, and cysteine 175 each contribute to the Zn(2+) site. Residues 200–205, aspartate 224, lysine 229, 293–295, and arginine 370 each bind NAD(+); these read GLGGVG and VGV.

This sequence belongs to the zinc-containing alcohol dehydrogenase family. In terms of assembly, dimer of identical or non-identical chains of three types; alpha, beta and gamma. Requires Zn(2+) as cofactor.

It localises to the cytoplasm. The enzyme catalyses all-trans-retinol + NAD(+) = all-trans-retinal + NADH + H(+). It catalyses the reaction all-trans-4-hydroxyretinol + NAD(+) = all-trans-4-hydroxyretinal + NADH + H(+). It carries out the reaction all-trans-4-oxoretinol + NAD(+) = all-trans-4-oxoretinal + NADH + H(+). Catalyzes the NAD-dependent oxidation of all-trans-retinol and its derivatives such as all-trans-4-hydroxyretinol and may participate in retinoid metabolism. In vitro can also catalyze the NADH-dependent reduction of all-trans-retinal and its derivatives such as all-trans-4-oxoretinal. Catalyzes in the oxidative direction with higher efficiency. Has the same affinity for all-trans-4-hydroxyretinol and all-trans-4-oxoretinal. The sequence is that of All-trans-retinol dehydrogenase [NAD(+)] ADH1B from Homo sapiens (Human).